The following is an 831-amino-acid chain: Periplasmic nitrate reductase (831 aa).

Positions 1 to 29 form a signal peptide, tat-type signal; that stretch reads MKFTRREFMKAQAAASAAAVAGIALPATA. The 4Fe-4S Mo/W bis-MGD-type domain occupies 41–97; it reads IKWEKAPCRFCGTGCSVLVGTQHGRVVATQGDPESPVNKGLNCVKGYFLSKIMYGKD. [4Fe-4S] cluster contacts are provided by Cys48, Cys51, Cys55, and Cys83. Mo-bis(molybdopterin guanine dinucleotide) is bound by residues Lys85, Gln152, Asn177, Cys181, 214–221, 245–249, 264–266, Met374, Gln378, Asn484, 510–511, Lys533, Asp560, and 720–729; these read WGSNMAEM, STYTH, QSD, SD, and TGRVLEHWHS. Trp796 is a substrate binding site. Mo-bis(molybdopterin guanine dinucleotide) is bound by residues Asn804 and Lys821.

Belongs to the prokaryotic molybdopterin-containing oxidoreductase family. NasA/NapA/NarB subfamily. Component of the periplasmic nitrate reductase NapAB complex composed of NapA and NapB. [4Fe-4S] cluster serves as cofactor. Requires Mo-bis(molybdopterin guanine dinucleotide) as cofactor. In terms of processing, predicted to be exported by the Tat system. The position of the signal peptide cleavage has not been experimentally proven.

It is found in the periplasm. It carries out the reaction 2 Fe(II)-[cytochrome] + nitrate + 2 H(+) = 2 Fe(III)-[cytochrome] + nitrite + H2O. Catalytic subunit of the periplasmic nitrate reductase complex NapAB. Receives electrons from NapB and catalyzes the reduction of nitrate to nitrite. The protein is Periplasmic nitrate reductase of Psychromonas ingrahamii (strain DSM 17664 / CCUG 51855 / 37).